Reading from the N-terminus, the 113-residue chain is U11-theraphotoxin-Hhn1u (113 aa).

The first 21 residues, 1–21 (MNTVRVTFLLVFVLAVSLGQA), serve as a signal peptide directing secretion. Residues 22–74 (DKDENRMEMQEKTEQGKSYLDFAENLLLQKLEELEAKLLEEDSEESRNSRQKR) constitute a propeptide that is removed on maturation. 3 cysteine pairs are disulfide-bonded: cysteine 75/cysteine 90, cysteine 82/cysteine 95, and cysteine 89/cysteine 110.

It belongs to the neurotoxin 14 (magi-1) family. 01 (HNTX-16) subfamily. In terms of tissue distribution, expressed by the venom gland.

The protein localises to the secreted. Functionally, probable ion channel inhibitor. This chain is U11-theraphotoxin-Hhn1u, found in Cyriopagopus hainanus (Chinese bird spider).